The following is a 1015-amino-acid chain: PHD finger protein 20-like protein 1 (1015 aa).

One can recognise a Tudor 1 domain in the interval 11 to 71 (ITFEIGARLE…SNRLRPLERP (61 aa)). Glycyl lysine isopeptide (Lys-Gly) (interchain with G-Cter in SUMO2) cross-links involve residues Lys75 and Lys79. The Tudor 2 domain occupies 85–141 (FDFKAGEEVLARWTDCRYYPAKIEAINKEGTFTVQFYDGVIRCLKRMHIKAMPEDAK). Disordered stretches follow at residues 183 to 206 (AKNK…RDGG) and 309 to 367 (EQAI…KAPK). Composition is skewed to polar residues over residues 186–197 (KTGSKPRTSANS) and 315–346 (KPQS…SSGK). Ser368 is subject to Phosphoserine. 2 disordered regions span residues 389–455 (VINK…SSVP) and 478–513 (CGSE…NPTS). A compositionally biased stretch (basic residues) spans 404–415 (PCKHSERRRRSQ). Residue Ser432 is modified to Phosphoserine. Polar residues-rich tracts occupy residues 443-453 (SISSQNQQESS) and 480-489 (SEVTGSQAPD). Lys530 participates in a covalent cross-link: Glycyl lysine isopeptide (Lys-Gly) (interchain with G-Cter in SUMO2). Residues 539-565 (EKTSTAFGKRKEKDKERKEKRDKDHYK) are compositionally biased toward basic and acidic residues. Residues 539–585 (EKTSTAFGKRKEKDKERKEKRDKDHYKPKQKKKKKKKKKSKQHDYSD) are disordered. Basic residues predominate over residues 566-579 (PKQKKKKKKKKKSK). The PHD-type zinc-finger motif lies at 681-729 (IVRCICELDEENGFMIQCEECLCWQHSVCMGLLEDSIPEQYICYICRDP). A Glycyl lysine isopeptide (Lys-Gly) (interchain with G-Cter in SUMO2) cross-link involves residue Lys849. Residues 859–878 (HSYQKPQSFSQDCHSLTDPG) show a composition bias toward polar residues. A disordered region spans residues 859-889 (HSYQKPQSFSQDCHSLTDPGSSDDDDVSSFE). Residues 879-889 (SSDDDDVSSFE) are compositionally biased toward acidic residues. An N6-acetyllysine modification is found at Lys907.

In terms of assembly, interacts with methylated DNMT1 (DNMT1K142me1). Interacts with SOX2.

It is found in the nucleus. Functionally, is a negative regulator of proteasomal degradation of a set of methylated proteins, including DNMT1 and SOX2. Involved in the maintainance of embryonic stem cells pluripotency, through the regulation of SOX2 levels. This chain is PHD finger protein 20-like protein 1 (Phf20l1), found in Rattus norvegicus (Rat).